The primary structure comprises 241 residues: Methylthioribulose-1-phosphate dehydratase (241 aa).

C96 serves as a coordination point for substrate. Zn(2+) contacts are provided by H114 and H116. E138 (proton donor/acceptor) is an active-site residue. H194 contributes to the Zn(2+) binding site.

It belongs to the aldolase class II family. MtnB subfamily. The cofactor is Zn(2+).

The protein resides in the cytoplasm. It carries out the reaction 5-(methylsulfanyl)-D-ribulose 1-phosphate = 5-methylsulfanyl-2,3-dioxopentyl phosphate + H2O. It functions in the pathway amino-acid biosynthesis; L-methionine biosynthesis via salvage pathway; L-methionine from S-methyl-5-thio-alpha-D-ribose 1-phosphate: step 2/6. Functionally, catalyzes the dehydration of methylthioribulose-1-phosphate (MTRu-1-P) into 2,3-diketo-5-methylthiopentyl-1-phosphate (DK-MTP-1-P). Functions in the methionine salvage pathway. May play a role in apoptosis. The protein is Methylthioribulose-1-phosphate dehydratase of Danio rerio (Zebrafish).